The following is a 180-amino-acid chain: ATP synthase subunit delta (180 aa).

Belongs to the ATPase delta chain family. As to quaternary structure, F-type ATPases have 2 components, F(1) - the catalytic core - and F(0) - the membrane proton channel. F(1) has five subunits: alpha(3), beta(3), gamma(1), delta(1), epsilon(1). F(0) has three main subunits: a(1), b(2) and c(10-14). The alpha and beta chains form an alternating ring which encloses part of the gamma chain. F(1) is attached to F(0) by a central stalk formed by the gamma and epsilon chains, while a peripheral stalk is formed by the delta and b chains.

Its subcellular location is the cell inner membrane. In terms of biological role, f(1)F(0) ATP synthase produces ATP from ADP in the presence of a proton or sodium gradient. F-type ATPases consist of two structural domains, F(1) containing the extramembraneous catalytic core and F(0) containing the membrane proton channel, linked together by a central stalk and a peripheral stalk. During catalysis, ATP synthesis in the catalytic domain of F(1) is coupled via a rotary mechanism of the central stalk subunits to proton translocation. Its function is as follows. This protein is part of the stalk that links CF(0) to CF(1). It either transmits conformational changes from CF(0) to CF(1) or is implicated in proton conduction. The protein is ATP synthase subunit delta of Chlorobium phaeobacteroides (strain BS1).